Here is a 478-residue protein sequence, read N- to C-terminus: Deoxyribodipyrimidine photo-lyase (478 aa).

The 135-residue stretch at 2–136 (NVNLMWFRND…IINCFHDSVL (135 aa)) folds into the Photolyase/cryptochrome alpha/beta domain. (6R)-5,10-methylene-5,6,7,8-tetrahydrofolate is bound at residue glutamate 110. FAD-binding positions include tyrosine 227 and 239–243 (TSMLS). Interaction with DNA stretches follow at residues 279–286 (ELLWREFY) and 346–347 (NR). Residue 377 to 379 (DGD) participates in FAD binding. Glutamine 409 is a binding site for DNA.

Belongs to the DNA photolyase class-1 family. Monomer. Requires FAD as cofactor. (6R)-5,10-methylene-5,6,7,8-tetrahydrofolate is required as a cofactor.

The enzyme catalyses cyclobutadipyrimidine (in DNA) = 2 pyrimidine residues (in DNA).. Its function is as follows. Involved in repair of UV radiation-induced DNA damage. Catalyzes the light-dependent monomerization (300-600 nm) of cyclobutyl pyrimidine dimers (in cis-syn configuration), which are formed between adjacent bases on the same DNA strand upon exposure to ultraviolet radiation. This chain is Deoxyribodipyrimidine photo-lyase (phrB), found in Buchnera aphidicola subsp. Baizongia pistaciae (strain Bp).